Reading from the N-terminus, the 239-residue chain is Uridylate kinase (239 aa).

13-16 (KVSG) serves as a coordination point for ATP. Gly55 is a UMP binding site. Gly56 and Arg60 together coordinate ATP. UMP is bound by residues Asp75 and 136-143 (TGNPFFTT). ATP-binding residues include Thr163, Gln164, Tyr169, and Asp172.

It belongs to the UMP kinase family. In terms of assembly, homohexamer.

It localises to the cytoplasm. It catalyses the reaction UMP + ATP = UDP + ADP. Its pathway is pyrimidine metabolism; CTP biosynthesis via de novo pathway; UDP from UMP (UMPK route): step 1/1. With respect to regulation, inhibited by UTP. Functionally, catalyzes the reversible phosphorylation of UMP to UDP. The sequence is that of Uridylate kinase from Bartonella henselae (strain ATCC 49882 / DSM 28221 / CCUG 30454 / Houston 1) (Rochalimaea henselae).